The sequence spans 169 residues: ATP-dependent Clp protease adapter protein CLPS2, chloroplastic (169 aa).

A chloroplast-targeting transit peptide spans Met-1–Phe-33. A disordered region spans residues Asp-67–Tyr-92.

The protein belongs to the ClpS family.

The protein resides in the plastid. The protein localises to the chloroplast stroma. Its function is as follows. Small adapter protein that modulate the activity of plastid Clp protease system (CLPC). Probably involved in substrate selection for plastid CLPC. This Chlamydomonas reinhardtii (Chlamydomonas smithii) protein is ATP-dependent Clp protease adapter protein CLPS2, chloroplastic.